Here is a 378-residue protein sequence, read N- to C-terminus: Integrator complex assembly factor WDR73 (378 aa).

WD repeat units lie at residues 73–113 (DFKV…VWQV), 121–163 (KAVS…VVDL), 167–205 (KTTY…LVDT), 214–255 (NRSP…LLDP), 266–305 (QCPV…VYDA), and 322–371 (EPLF…VWDW).

This sequence belongs to the WD repeat WDR73 family. Interacts with INTS9 and INTS11; the interaction is direct. Part of the multiprotein complex composed of BRAT1, WDR73, as well as integrator complex subunits INTS9 and INTS11. Expressed in kidney and brain. In the kidney, expressed in glomeruli, most probably in podocytes, and in tubules (at protein level). In the brain, expressed in the cerebellum, with high levels in Purkinje cells and their projecting axons, in the deep cerebellar nuclei and in pyramidal neurons of the cerebral cortex (at protein level). In the white matter, mainly present in astrocytes, but not in oligodendrocytes (at protein level). Also highly expressed in endothelial cells of cerebral capillaries (at protein level).

It localises to the cytoplasm. The protein resides in the cytoskeleton. Its subcellular location is the spindle. It is found in the spindle pole. The protein localises to the cleavage furrow. In terms of biological role, component of a multiprotein complex required for the assembly of the RNA endonuclease module of the integrator complex. Associates with INTS9 and INTS11 in the cytoplasm, stabilizing the INTS9-INTS11 heterodimer and blocking the active site of INTS11. BRAT1 then joins the complex and plugs the active site of INTS11, leading to WDR73 release and nuclear import of INTS9 and INTS11. This chain is Integrator complex assembly factor WDR73, found in Homo sapiens (Human).